A 165-amino-acid polypeptide reads, in one-letter code: uncharacterized protein (165 aa).

The helical transmembrane segment at 15–35 threads the bilayer; the sequence is MSPAIILIGVLILIVLFVIKF. A coiled-coil region spans residues 67–119; it reads ISQLNTLRATLAAKKKELKTLRTARKKECTEQLAKTQAEVDRIQAKIDNFSSR. The segment at 123–156 is disordered; sequence VPLPGGEVGPPYNPPPPRTNTRPNPRPNPRPAQL. The segment covering 133–154 has biased composition (pro residues); it reads PYNPPPPRTNTRPNPRPNPRPA.

It localises to the membrane. This is an uncharacterized protein from Acheta domesticus (House cricket).